Reading from the N-terminus, the 362-residue chain is Quinolone epoxide rearrangement protein penF (362 aa).

Residue His220 is part of the active site. Residue Glu222 is the Broensted acid of the active site.

The protein belongs to the quinolone epoxide rearrangement protein penF family.

The enzyme catalyses [(1'E)-5'-(3',3'-dimethyloxiran-2'-yl)-3'-hydroxy-3'-methylpent-1'-en-1'-yl]-quinolinone B = yaequinolone D. It functions in the pathway secondary metabolite biosynthesis. The protein operates within alkaloid biosynthesis. It participates in mycotoxin biosynthesis. Functionally, quinolone epoxide rearrangement protein; part of the gene cluster that mediates the biosynthesis of penigequinolones, potent insecticidal alkaloids that contain a highly modified 10-carbon prenyl group. The first stage is catalyzed by the nonribosomal peptide synthetase penN that condenses anthranilic acid and O-methyl-L-tyrosine to produce 4'-methoxycyclopeptin. 4'-methoxycyclopeptin is then converted to 4'-methoxydehydrocyclopeptin by the ketoglutarate-dependent dioxygenase penM through dehydrogenation to form a double bond between C-alpha and C-beta of the O-methyltyrosine side chain. PenM also converts its first product methoxydehydrocyclopeptin to 4'-methoxycyclopenin. The following conversion of 4'methoxycyclopenin into 4'-methoxyviridicatin is catalyzed by the cyclopenase penL. 4'-methoxyviridicatin is the precursor of quinolone natural products, and is further converted to quinolinone B. The prenyltransferase penI then catalyzes the canonical Friedel-Crafts alkylation of quinolinone B with dimethylallyl cation to yield dimethylallyl quinolone, which is subjected to FAD-dependent dehydrogenation by the FAD-linked oxidoreductase penH to yield conjugated aryl diene. The delta(3') double bond then serves as the site of the second alkylation with DMAPP catalyzed by the prenyltransferase penG to yield a carbenium ion intermediate, which can be attacked by H(2)O to yield a styrenyl quinolone containing a C3'-hydroxyprenyl chain, or undergo cyclization to yield yaequinolones J1 and J2. The conversion of the styrenyl quinolone into the tetrahydrofuran-containing yaequinolone C is performed by the FAD-dependent monooxygenase penE and involves epoxidation of the terminal C7'-C8' olefin, followed by epoxide ring opening initiated by the C3' hydroxyl group. The predicted cysteine hydrolase penJ acts as an epoxide hydrolase that enhances the rate of the 5-exo-tet cyclization step, increasing the yield of yaequinolone C. PenF catalyzes the cationic rearrangement of the epoxide formed by penE (before ring opening to produce yaequinolone C) into yaequinolone D. Finally, the short-chain dehydrogenase/reductase (SDR)-like reductase penD, catalyzes both the dehydration of yaequinolone D and the reduction of the resulting oxonium to yield penigequinolone. This chain is Quinolone epoxide rearrangement protein penF, found in Penicillium thymicola.